Reading from the N-terminus, the 59-residue chain is Beta-defensin 134 (59 aa).

Positions 1 to 19 are cleaved as a signal peptide; sequence MKPLLVVFVFLFLWDPVLA. Disulfide bonds link C25–C51, C31–C45, and C35–C52.

It belongs to the beta-defensin family.

Its subcellular location is the secreted. Has antibacterial activity. In Pan troglodytes (Chimpanzee), this protein is Beta-defensin 134 (DEFB134).